A 260-amino-acid chain; its full sequence is Hemin import ATP-binding protein HmuV (260 aa).

One can recognise an ABC transporter domain in the interval Ile-7 to Ser-243. Gly-39–Ser-46 provides a ligand contact to ATP.

This sequence belongs to the ABC transporter superfamily. Heme (hemin) importer (TC 3.A.1.14.5) family. As to quaternary structure, the complex is composed of two ATP-binding proteins (HmuV), two transmembrane proteins (HmuU) and a solute-binding protein (HmuT).

The protein localises to the cell inner membrane. In terms of biological role, part of the ABC transporter complex HmuTUV involved in hemin import. Responsible for energy coupling to the transport system. In Vibrio anguillarum (strain ATCC 68554 / 775) (Listonella anguillarum), this protein is Hemin import ATP-binding protein HmuV.